The chain runs to 220 residues: Response regulator ArlR (220 aa).

The Response regulatory domain maps to K3 to L116. 4-aspartylphosphate is present on D52. A DNA-binding region (ompR/PhoB-type) is located at residues K122–Q220.

Phosphorylated by ArlS.

It localises to the cytoplasm. Its function is as follows. Member of the two-component regulatory system ArlS/ArlR. This chain is Response regulator ArlR (arlR), found in Staphylococcus saprophyticus subsp. saprophyticus (strain ATCC 15305 / DSM 20229 / NCIMB 8711 / NCTC 7292 / S-41).